The primary structure comprises 439 residues: ATP-dependent RNA helicase RhlB (439 aa).

The short motif at 9–37 (QKFADLPLHPEVKQALAENGFEFCTPIQA) is the Q motif element. The Helicase ATP-binding domain occupies 40–219 (LPVLLQSKDI…YDHMNDPVKV (180 aa)). 53–60 (AQTGTGKT) serves as a coordination point for ATP. Positions 165–168 (DEAD) match the DEAD box motif. The region spanning 243–390 (KMRLLLTLIE…VSNYDSSALL (148 aa)) is the Helicase C-terminal domain. The disordered stretch occupies residues 398–439 (KIPRKHPAGTRNLRERAGAGRPQGAHRSGGRPPRHDRTRRHS). Positions 425-439 (SGGRPPRHDRTRRHS) are enriched in basic residues.

Belongs to the DEAD box helicase family. RhlB subfamily. As to quaternary structure, component of the RNA degradosome, which is a multiprotein complex involved in RNA processing and mRNA degradation.

The protein localises to the cytoplasm. The enzyme catalyses ATP + H2O = ADP + phosphate + H(+). DEAD-box RNA helicase involved in RNA degradation. Has RNA-dependent ATPase activity and unwinds double-stranded RNA. The protein is ATP-dependent RNA helicase RhlB of Shewanella putrefaciens (strain CN-32 / ATCC BAA-453).